Reading from the N-terminus, the 445-residue chain is Argininosuccinate synthase (445 aa).

ATP contacts are provided by residues 17-25 and A43; that span reads AFSGGLDTS. Residue Y99 participates in L-citrulline binding. Residues G129 and T131 each coordinate ATP. The L-aspartate site is built by T131, N135, and D136. N135 is a binding site for L-citrulline. D136 serves as a coordination point for ATP. L-citrulline is bound by residues R139 and S192. D194 contacts ATP. T201, E203, and E280 together coordinate L-citrulline.

It belongs to the argininosuccinate synthase family. Type 2 subfamily. Homotetramer.

The protein resides in the cytoplasm. The catalysed reaction is L-citrulline + L-aspartate + ATP = 2-(N(omega)-L-arginino)succinate + AMP + diphosphate + H(+). It functions in the pathway amino-acid biosynthesis; L-arginine biosynthesis; L-arginine from L-ornithine and carbamoyl phosphate: step 2/3. This chain is Argininosuccinate synthase, found in Afipia carboxidovorans (strain ATCC 49405 / DSM 1227 / KCTC 32145 / OM5) (Oligotropha carboxidovorans).